A 170-amino-acid polypeptide reads, in one-letter code: Adenine phosphoribosyltransferase (170 aa).

It belongs to the purine/pyrimidine phosphoribosyltransferase family. Homodimer.

Its subcellular location is the cytoplasm. The enzyme catalyses AMP + diphosphate = 5-phospho-alpha-D-ribose 1-diphosphate + adenine. Its pathway is purine metabolism; AMP biosynthesis via salvage pathway; AMP from adenine: step 1/1. Catalyzes a salvage reaction resulting in the formation of AMP, that is energically less costly than de novo synthesis. The chain is Adenine phosphoribosyltransferase from Streptococcus pneumoniae (strain Taiwan19F-14).